We begin with the raw amino-acid sequence, 100 residues long: Putative pterin-4-alpha-carbinolamine dehydratase (100 aa).

This sequence belongs to the pterin-4-alpha-carbinolamine dehydratase family.

The enzyme catalyses (4aS,6R)-4a-hydroxy-L-erythro-5,6,7,8-tetrahydrobiopterin = (6R)-L-erythro-6,7-dihydrobiopterin + H2O. This Rhodopseudomonas palustris (strain TIE-1) protein is Putative pterin-4-alpha-carbinolamine dehydratase.